The following is a 123-amino-acid chain: Ribosome-binding factor A (123 aa).

Belongs to the RbfA family. In terms of assembly, monomer. Binds 30S ribosomal subunits, but not 50S ribosomal subunits or 70S ribosomes.

Its subcellular location is the cytoplasm. Functionally, one of several proteins that assist in the late maturation steps of the functional core of the 30S ribosomal subunit. Associates with free 30S ribosomal subunits (but not with 30S subunits that are part of 70S ribosomes or polysomes). Required for efficient processing of 16S rRNA. May interact with the 5'-terminal helix region of 16S rRNA. This is Ribosome-binding factor A from Prochlorococcus marinus (strain NATL1A).